The primary structure comprises 61 residues: Small ribosomal subunit protein uS14 (61 aa).

Zn(2+) is bound by residues cysteine 24, cysteine 27, cysteine 40, and cysteine 43.

This sequence belongs to the universal ribosomal protein uS14 family. Zinc-binding uS14 subfamily. As to quaternary structure, part of the 30S ribosomal subunit. Contacts proteins S3 and S10. It depends on Zn(2+) as a cofactor.

Its function is as follows. Binds 16S rRNA, required for the assembly of 30S particles and may also be responsible for determining the conformation of the 16S rRNA at the A site. The sequence is that of Small ribosomal subunit protein uS14 from Sulfurovum sp. (strain NBC37-1).